Consider the following 605-residue polypeptide: Aspartate--tRNA(Asp/Asn) ligase (605 aa).

Glu178 is an L-aspartate binding site. Positions 202–205 are aspartate; the sequence is QLFK. Arg224 provides a ligand contact to L-aspartate. ATP contacts are provided by residues 224–226 and Gln233; that span reads RDE. His458 is a binding site for L-aspartate. Glu488 is an ATP binding site. Arg495 provides a ligand contact to L-aspartate. 540-543 contributes to the ATP binding site; sequence GLDR. The tract at residues 580–605 is disordered; the sequence is QQLKELHVTPAKPAKTTAKTKPRPAD.

Belongs to the class-II aminoacyl-tRNA synthetase family. Type 1 subfamily. As to quaternary structure, homodimer.

The protein localises to the cytoplasm. It catalyses the reaction tRNA(Asx) + L-aspartate + ATP = L-aspartyl-tRNA(Asx) + AMP + diphosphate. In terms of biological role, aspartyl-tRNA synthetase with relaxed tRNA specificity since it is able to aspartylate not only its cognate tRNA(Asp) but also tRNA(Asn). Reaction proceeds in two steps: L-aspartate is first activated by ATP to form Asp-AMP and then transferred to the acceptor end of tRNA(Asp/Asn). The sequence is that of Aspartate--tRNA(Asp/Asn) ligase from Thermosynechococcus vestitus (strain NIES-2133 / IAM M-273 / BP-1).